Here is a 326-residue protein sequence, read N- to C-terminus: Biotin synthase (326 aa).

A Radical SAM core domain is found at 40 to 264; that stretch reads GQVQACTLVS…VLPRSYVRLA (225 aa). Residues Cys-55, Cys-59, and Cys-62 each contribute to the [4Fe-4S] cluster site. [2Fe-2S] cluster-binding residues include Cys-99, Cys-130, Cys-190, and Arg-262.

The protein belongs to the radical SAM superfamily. Biotin synthase family. As to quaternary structure, homodimer. Requires [4Fe-4S] cluster as cofactor. It depends on [2Fe-2S] cluster as a cofactor.

The enzyme catalyses (4R,5S)-dethiobiotin + (sulfur carrier)-SH + 2 reduced [2Fe-2S]-[ferredoxin] + 2 S-adenosyl-L-methionine = (sulfur carrier)-H + biotin + 2 5'-deoxyadenosine + 2 L-methionine + 2 oxidized [2Fe-2S]-[ferredoxin]. It participates in cofactor biosynthesis; biotin biosynthesis; biotin from 7,8-diaminononanoate: step 2/2. Functionally, catalyzes the conversion of dethiobiotin (DTB) to biotin by the insertion of a sulfur atom into dethiobiotin via a radical-based mechanism. The polypeptide is Biotin synthase (Halorhodospira halophila (strain DSM 244 / SL1) (Ectothiorhodospira halophila (strain DSM 244 / SL1))).